A 413-amino-acid chain; its full sequence is RING-H2 finger protein ATL54 (413 aa).

The helical transmembrane segment at 83–103 (ISIITITGAVLAILLTGFFLV) threads the bilayer. The segment at 177 to 219 (CPVCLNEFEEDESLRLLPKCNHAFHISCIDTWLSSHTNCPLCR) adopts an RING-type; atypical zinc-finger fold. Disordered regions lie at residues 238-258 (VTPG…EDHG) and 321-413 (THVE…VFPL). Positions 387 to 401 (SSSTLKTNGSSSSVS) are enriched in low complexity. A compositionally biased stretch (polar residues) spans 402-413 (CFNKNKSSVFPL).

This sequence belongs to the RING-type zinc finger family. ATL subfamily.

The protein localises to the membrane. It carries out the reaction S-ubiquitinyl-[E2 ubiquitin-conjugating enzyme]-L-cysteine + [acceptor protein]-L-lysine = [E2 ubiquitin-conjugating enzyme]-L-cysteine + N(6)-ubiquitinyl-[acceptor protein]-L-lysine.. The protein operates within protein modification; protein ubiquitination. In Arabidopsis thaliana (Mouse-ear cress), this protein is RING-H2 finger protein ATL54 (ATL54).